The following is a 302-amino-acid chain: Mediator of RNA polymerase II transcription subunit 6 (302 aa).

The interval Ala260–Ala281 is disordered.

It belongs to the Mediator complex subunit 6 family. Component of the Mediator complex.

The protein localises to the nucleus. In terms of biological role, component of the Mediator complex, a coactivator involved in the regulated transcription of nearly all RNA polymerase II-dependent genes. Mediator functions as a bridge to convey information from gene-specific regulatory proteins to the basal RNA polymerase II transcription machinery. Mediator is recruited to promoters by direct interactions with regulatory proteins and serves as a scaffold for the assembly of a functional preinitiation complex with RNA polymerase II and the general transcription factors. The sequence is that of Mediator of RNA polymerase II transcription subunit 6 (MED6) from Candida glabrata (strain ATCC 2001 / BCRC 20586 / JCM 3761 / NBRC 0622 / NRRL Y-65 / CBS 138) (Yeast).